The primary structure comprises 291 residues: Formamidopyrimidine-DNA glycosylase (291 aa).

The active-site Schiff-base intermediate with DNA is the P2. E3 serves as the catalytic Proton donor. The active-site Proton donor; for beta-elimination activity is the K58. Residues H100, R123, and K166 each coordinate DNA. The FPG-type zinc-finger motif lies at 257-291 (SVYGREGKECLHCGIPIVRILQSGRSSFYCSQCQK). R281 serves as the catalytic Proton donor; for delta-elimination activity.

Belongs to the FPG family. Monomer. The cofactor is Zn(2+).

The catalysed reaction is Hydrolysis of DNA containing ring-opened 7-methylguanine residues, releasing 2,6-diamino-4-hydroxy-5-(N-methyl)formamidopyrimidine.. It carries out the reaction 2'-deoxyribonucleotide-(2'-deoxyribose 5'-phosphate)-2'-deoxyribonucleotide-DNA = a 3'-end 2'-deoxyribonucleotide-(2,3-dehydro-2,3-deoxyribose 5'-phosphate)-DNA + a 5'-end 5'-phospho-2'-deoxyribonucleoside-DNA + H(+). Its function is as follows. Involved in base excision repair of DNA damaged by oxidation or by mutagenic agents. Acts as a DNA glycosylase that recognizes and removes damaged bases. Has a preference for oxidized purines, such as 7,8-dihydro-8-oxoguanine (8-oxoG). Has AP (apurinic/apyrimidinic) lyase activity and introduces nicks in the DNA strand. Cleaves the DNA backbone by beta-delta elimination to generate a single-strand break at the site of the removed base with both 3'- and 5'-phosphates. The polypeptide is Formamidopyrimidine-DNA glycosylase (Bartonella henselae (strain ATCC 49882 / DSM 28221 / CCUG 30454 / Houston 1) (Rochalimaea henselae)).